Reading from the N-terminus, the 555-residue chain is Connector enhancer of kinase suppressor of ras 3 (555 aa).

An SAM domain is found at 7–72 (WSPKQVVDWT…LEAVDLLCAL (66 aa)). One can recognise a CRIC domain in the interval 80–174 (TMKNLVLKLR…TAVQKDCLIA (95 aa)). A PDZ domain is found at 211–293 (EVHLPNVRPG…GVVLLLKKRP (83 aa)). Disordered regions lie at residues 308–333 (RWKP…MDAS), 362–389 (SFGY…SFLD), and 518–538 (PFQE…ASSG). Residues 311 to 329 (PPLVQTSPPPTTTQSPEST) are compositionally biased toward low complexity. The 222-residue stretch at 325–546 (SPESTMDASL…SGEPSLLVSW (222 aa)) folds into the DUF1170 domain. A phosphoserine mark is found at serine 381 and serine 383.

This sequence belongs to the CNKSR family. As to quaternary structure, interacts with epithelial sodium channel ENaC. Interacts directly with SCNN1A (ENaC subunit alpha) and SCNN1B (ENaC subunit beta) C-terminal tails. Interacts with ENaC regulatory proteins NEDD4L, RAF1 and SGK1. In terms of tissue distribution, expressed in kidney.

The protein localises to the cytoplasm. The protein resides in the apical cell membrane. Its function is as follows. Involved in transepithelial sodium transport. Regulates aldosterone-induced and epithelial sodium channel (ENaC)-mediated sodium transport through regulation of ENaC cell surface expression. Acts as a scaffold protein coordinating the assembly of an ENaC-regulatory complex (ERC). The polypeptide is Connector enhancer of kinase suppressor of ras 3 (Cnksr3) (Mus musculus (Mouse)).